The chain runs to 1431 residues: Zinc finger protein 687b (1431 aa).

2 disordered regions span residues 24-481 (KEAI…RPLK) and 504-538 (KGGA…TTAG). Residues 61 to 73 (SPSPSTDSQSDPS) show a composition bias toward low complexity. Residues 103 to 122 (GFVSSGGSVHMSQSRGQPNG) show a composition bias toward polar residues. 3 stretches are compositionally biased toward low complexity: residues 174–188 (MQLL…EMNL), 196–209 (APAN…AASP), and 217–248 (LLST…ASSP). Residues 249-267 (LATSLTEPFNGTPRLSSSA) show a composition bias toward polar residues. The segment covering 311–324 (SQSPSIPPSTSISP) has biased composition (low complexity). Polar residues predominate over residues 342-359 (RAQQNWLSTAAQTGNGKS). Positions 361–377 (PQEERNPEHVIEERDSP) are enriched in basic and acidic residues. Positions 385-410 (PKSSMPTSAVTKRSCSPAAASSPSAA) are enriched in low complexity. Positions 438-449 (DGGKGDTDKIEV) are enriched in basic and acidic residues. The span at 519–528 (QTGGRAGPVK) shows a compositional bias: gly residues. The C2H2-type 1; degenerate zinc-finger motif lies at 674–692 (YRCLECGDSFALERSLARH). The interval 754–816 (TTPIGMLSPS…GPQSPQALMP (63 aa)) is disordered. Over residues 760 to 775 (LSPSLSSPPLTSSTTP) the composition is skewed to low complexity. Over residues 781 to 802 (APSTSSPLKDSPSPGTASTQPS) the composition is skewed to polar residues. Residues 830 to 853 (FKCPECQAQFLSKAELVTHFQQIR) form a C2H2-type 2; degenerate zinc finger. 4 consecutive C2H2-type zinc fingers follow at residues 919 to 942 (YRCS…QTAH), 947 to 970 (HKCP…TSQH), 982 to 1004 (YKCV…FDTH), and 1013 to 1036 (FKCP…KTAH). The segment at 1041–1120 (VKAETPPTTS…QVSSPESGNM (80 aa)) is disordered. Over residues 1043–1057 (AETPPTTSSPVSAPA) the composition is skewed to low complexity. The span at 1058–1075 (GNSTSKPKPATENNSDEL) shows a compositional bias: polar residues. A compositionally biased stretch (acidic residues) spans 1080 to 1111 (GEEEEEGEDEEGEQEGEEREDEEEEENEEEEQ). A C2H2-type 7 zinc finger spans residues 1122–1145 (WRCKECKKRFPEREDYIDHMKNEH). A C2H2-type 8; degenerate zinc finger spans residues 1205–1227 (WHCSEGKRTFSSRLILEKHIRVR). The segment at 1225-1310 (RVRHGIRSRQ…EEEDGTFRCT (86 aa)) is disordered. 2 consecutive C2H2-type zinc fingers follow at residues 1307-1329 (FRCT…IPVH) and 1337-1360 (QQCL…FITH). Positions 1362–1392 (LRQGQHDRNASPGASPQYGSPSSPKAGEDGD) are disordered. The span at 1373-1384 (PGASPQYGSPSS) shows a compositional bias: polar residues. The C2H2-type 11 zinc-finger motif lies at 1395–1425 (VSCRVCGRRFDKASDLNTHFRTHGMAFITAH).

Belongs to the krueppel C2H2-type zinc-finger protein family. In terms of tissue distribution, widely expressed with highest levels in eye, spleen and ovary.

It is found in the nucleus. Its function is as follows. May be involved in transcriptional regulation. This chain is Zinc finger protein 687b (znf687b), found in Danio rerio (Zebrafish).